Here is a 351-residue protein sequence, read N- to C-terminus: Sulfate/thiosulfate import ATP-binding protein CysA (351 aa).

The ABC transporter domain maps to 3-237 (ITVRNLHKRF…PRSAFVYEFL (235 aa)). Residue 35-42 (GPSGCGKT) participates in ATP binding.

The protein belongs to the ABC transporter superfamily. Sulfate/tungstate importer (TC 3.A.1.6) family. As to quaternary structure, the complex is composed of two ATP-binding proteins (CysA), two transmembrane proteins (CysT and CysW) and a solute-binding protein (CysP).

The protein resides in the cell inner membrane. It carries out the reaction sulfate(out) + ATP + H2O = sulfate(in) + ADP + phosphate + H(+). The enzyme catalyses thiosulfate(out) + ATP + H2O = thiosulfate(in) + ADP + phosphate + H(+). Its function is as follows. Part of the ABC transporter complex CysAWTP involved in sulfate/thiosulfate import. Responsible for energy coupling to the transport system. The chain is Sulfate/thiosulfate import ATP-binding protein CysA from Burkholderia mallei (strain ATCC 23344).